A 261-amino-acid polypeptide reads, in one-letter code: Receptor expression-enhancing protein 4 (261 aa).

The next 2 membrane-spanning stretches (helical) occupy residues M1 to Y21 and Y35 to T55. Positions E177 to N261 are disordered. Residues A191–D202 are compositionally biased toward basic and acidic residues.

This sequence belongs to the DP1 family. In terms of assembly, interacts with microtubules. During gastrulation, expressed on the dorsal side of the embryo and then in the neural plate and neural tube. At tailbud stages, expressed in the somites. Expressed in the neural tube later in development.

The protein resides in the endoplasmic reticulum membrane. Its function is as follows. Microtubule-binding protein required to ensure proper cell division and nuclear envelope reassembly by sequestering the endoplasmic reticulum away from chromosomes during mitosis. Probably acts by clearing the endoplasmic reticulum membrane from metaphase chromosomes. May play a role in the maintenance of both the nervous system and the musculature. The polypeptide is Receptor expression-enhancing protein 4 (reep4) (Xenopus tropicalis (Western clawed frog)).